A 441-amino-acid chain; its full sequence is Queuine tRNA-ribosyltransferase accessory subunit 2 (441 aa).

Positions 307, 309, 312, and 338 each coordinate Zn(2+).

This sequence belongs to the queuine tRNA-ribosyltransferase family. QTRT2 subfamily. As to quaternary structure, heterodimer of a catalytic subunit and an accessory subunit. Zn(2+) serves as cofactor.

Its subcellular location is the cytoplasm. Its function is as follows. Non-catalytic subunit of the queuine tRNA-ribosyltransferase (TGT) that catalyzes the base-exchange of a guanine (G) residue with queuine (Q) at position 34 (anticodon wobble position) in tRNAs with GU(N) anticodons (tRNA-Asp, -Asn, -His and -Tyr), resulting in the hypermodified nucleoside queuosine (7-(((4,5-cis-dihydroxy-2-cyclopenten-1-yl)amino)methyl)-7-deazaguanosine). In Schizosaccharomyces pombe (strain 972 / ATCC 24843) (Fission yeast), this protein is Queuine tRNA-ribosyltransferase accessory subunit 2 (qtr2).